We begin with the raw amino-acid sequence, 121 residues long: MSNQVLLDKLDRTTETLSNTLIHLAKLSDIEFGGKDTEQPRSSSGLATVSSSGVQMSNNYTMQLIKGIQDLLVITRSIREKWVLSQLPENEELSMFESEETLENCRKLVQESMETLLNDMP.

Belongs to the Mediator complex subunit 22 family. In terms of assembly, component of the Mediator complex.

It localises to the nucleus. Functionally, component of the Mediator complex, a coactivator involved in the regulated transcription of nearly all RNA polymerase II-dependent genes. Mediator functions as a bridge to convey information from gene-specific regulatory proteins to the basal RNA polymerase II transcription machinery. Mediator is recruited to promoters by direct interactions with regulatory proteins and serves as a scaffold for the assembly of a functional preinitiation complex with RNA polymerase II and the general transcription factors. The polypeptide is Mediator of RNA polymerase II transcription subunit 22 (SRB6) (Kluyveromyces lactis (strain ATCC 8585 / CBS 2359 / DSM 70799 / NBRC 1267 / NRRL Y-1140 / WM37) (Yeast)).